A 144-amino-acid polypeptide reads, in one-letter code: Globin-1 (144 aa).

Residues 1 to 141 enclose the Globin domain; it reads VSANDIKNVQ…ILHQMSSYFA (141 aa). Position 89 (His-89) interacts with heme b.

This sequence belongs to the globin family. Homodimer.

This chain is Globin-1, found in Phreagena soyoae (Deep-sea cold-seep clam).